The primary structure comprises 701 residues: Aryl hydrocarbon receptor repressor (701 aa).

Positions 25 to 78 constitute a bHLH domain; that stretch reads TMGAEKSNPSKRHRDRLNTELDHLASLLPFSPDIISKLDKLSVLRLSVSYLRVK. The PAS domain maps to 106-176; it reads PVQEGRLLLE…RQLHWAMDPP (71 aa). Residues 409–430 are compositionally biased toward polar residues; it reads TEQRSQESTTKLTRQPSKNEPS. The segment at 409 to 432 is disordered; sequence TEQRSQESTTKLTRQPSKNEPSTC. The segment at 555–701 is needed for transcriptional repression; that stretch reads ASTTSCLWLG…SKGSDGIFLP (147 aa). Residues Lys-583 and Lys-660 each participate in a glycyl lysine isopeptide (Lys-Gly) (interchain with G-Cter in SUMO2) cross-link.

Interacts with ARNT, ANKRA2, HDAC4 and HDAC5. Interacts with ARNT; forms a heterodimer with ARNT.

It is found in the cytoplasm. Its subcellular location is the nucleus. Functionally, mediates dioxin toxicity and is involved in regulation of cell growth and differentiation. Represses the transcription activity of AHR by competing with this transcription factor for heterodimer formation with the ARNT and subsequently binding to the xenobiotic response element (XRE) sequence present in the promoter regulatory region of variety of genes. Represses CYP1A1 by binding the XRE sequence and recruiting ANKRA2, HDAC4 and/or HDAC5. Autoregulates its expression by associating with its own XRE site. The polypeptide is Aryl hydrocarbon receptor repressor (Ahrr) (Mus musculus (Mouse)).